A 67-amino-acid chain; its full sequence is Conotoxin AbVIO (67 aa).

The signal sequence occupies residues 1–17 (VIIIAVLFLTACQLIAT). Residues 18-40 (ASYARSERKHPDLRLSSRNSKLS) constitute a propeptide that is removed on maturation. Intrachain disulfides connect Cys-43–Cys-57, Cys-50–Cys-61, and Cys-56–Cys-66.

Belongs to the conotoxin O1 superfamily. As to expression, expressed by the venom duct.

The protein resides in the secreted. This chain is Conotoxin AbVIO, found in Conus abbreviatus (Abbreviated cone).